Reading from the N-terminus, the 827-residue chain is Inactive rhomboid protein 2 (827 aa).

A disordered region spans residues 1 to 87; that stretch reads MDSTDKNGES…GFRRQASLSQ (87 aa). The Cytoplasmic portion of the chain corresponds to 1-380; it reads MDSTDKNGES…HRPYFTYWLT (380 aa). Ser-60 carries the post-translational modification Phosphoserine. The span at 64-77 shows a compositional bias: basic and acidic residues; that stretch reads QRGRWQEGSSEKRP. Residues Ser-84, Ser-88, Ser-294, Ser-296, and Ser-299 each carry the phosphoserine modification. A helical membrane pass occupies residues 381–401; the sequence is FVHIIITLLVICTYGIAPVGF. The Lumenal portion of the chain corresponds to 402–631; the sequence is AQHVTTQLVL…PDQFYRLWLS (230 aa). A helical membrane pass occupies residues 632–652; that stretch reads LFLHAGVVHCLVSVVFQMTIL. At 653 to 663 the chain is on the cytoplasmic side; that stretch reads RDLEKLAGWHR. A helical transmembrane segment spans residues 664-684; it reads IAIIFILSGITGNLASAIFLP. Residues 685 to 686 are Lumenal-facing; that stretch reads YR. The helical transmembrane segment at 687–707 threads the bilayer; that stretch reads AEVGPAGSQFGLLACLFVELF. The Cytoplasmic segment spans residues 708–718; the sequence is QSWQLLERPWK. A helical membrane pass occupies residues 719–739; the sequence is AFLNLSAIVLFLFICGLLPWI. At 740–744 the chain is on the lumenal side; sequence DNIAH. Residues 745-765 form a helical membrane-spanning segment; that stretch reads IFGFLSGLLLAFAFLPYITFG. The Cytoplasmic portion of the chain corresponds to 766–773; it reads TSDKYRKR. Residues 774–794 form a helical membrane-spanning segment; the sequence is ALILVSLLVFAGLFASLVIWL. The Lumenal segment spans residues 795–827; it reads YVYPINWPWIEYLTCFPFTSRFCEKYELDQVLH.

It belongs to the peptidase S54 family. In terms of assembly, interacts with EGF. Interacts (via cytoplasmic N-terminus) with FRMD8/iTAP; this interaction leads to mutual protein stabilization. Interacts with ADAM17/TACE. As to expression, detected in retina and spleen.

The protein localises to the endoplasmic reticulum membrane. Its subcellular location is the cell membrane. Functionally, regulates ADAM17 protease, a sheddase of the epidermal growth factor (EGF) receptor ligands and TNF, thereby plays a role in sleep, cell survival, proliferation, migration and inflammation. Does not exhibit any protease activity on its own. This chain is Inactive rhomboid protein 2 (RHBDF2), found in Canis lupus familiaris (Dog).